We begin with the raw amino-acid sequence, 355 residues long: Phosphoribosylformylglycinamidine cyclo-ligase (355 aa).

Belongs to the AIR synthase family.

The protein resides in the cytoplasm. It carries out the reaction 2-formamido-N(1)-(5-O-phospho-beta-D-ribosyl)acetamidine + ATP = 5-amino-1-(5-phospho-beta-D-ribosyl)imidazole + ADP + phosphate + H(+). It functions in the pathway purine metabolism; IMP biosynthesis via de novo pathway; 5-amino-1-(5-phospho-D-ribosyl)imidazole from N(2)-formyl-N(1)-(5-phospho-D-ribosyl)glycinamide: step 2/2. This chain is Phosphoribosylformylglycinamidine cyclo-ligase, found in Methylobacterium sp. (strain 4-46).